Consider the following 163-residue polypeptide: NADH-quinone oxidoreductase subunit I (163 aa).

4Fe-4S ferredoxin-type domains are found at residues 54-84 (LRRYPNGEERCIACKLCEAVCPAQAITIDAE) and 94-123 (TRYDIDMTKCIYCGFCQEACPVDAIVEGPN). 8 residues coordinate [4Fe-4S] cluster: cysteine 64, cysteine 67, cysteine 70, cysteine 74, cysteine 103, cysteine 106, cysteine 109, and cysteine 113.

Belongs to the complex I 23 kDa subunit family. NDH-1 is composed of at least 14 different subunits, Nqo1 to Nqo14. The complex has a L-shaped structure, with the hydrophobic arm (subunits Nqo7, Nqo8, Nqo10 to Nqo14) embedded in the inner membrane and the hydrophilic peripheral arm (subunits Nqo1 to Nqo6, Nqo9) protruding into the bacterial cytoplasm. The hydrophilic domain contains all the redox centers. NADH-quinone oxidoreductase forms a supercomplex with ubiquinol-cytochrome c reductase complex (complex III or cytochrome b-c1 complex) and cytochrome c oxidase (complex IV), which stabilizes the NADH-quinone oxidoreductase complex. Requires [4Fe-4S] cluster as cofactor.

It localises to the cell inner membrane. It carries out the reaction a quinone + NADH + 5 H(+)(in) = a quinol + NAD(+) + 4 H(+)(out). NDH-1 shuttles electrons from NADH, via FMN and iron-sulfur (Fe-S) centers, to quinones in the respiratory chain. The immediate electron acceptor for the enzyme in this species is believed to be ubiquinone. Couples the redox reaction to proton translocation (for every two electrons transferred, four hydrogen ions are translocated across the cytoplasmic membrane), and thus conserves the redox energy in a proton gradient. The polypeptide is NADH-quinone oxidoreductase subunit I (Paracoccus denitrificans (strain Pd 1222)).